A 105-amino-acid polypeptide reads, in one-letter code: Heme oxygenase (mycobilin-producing) (105 aa).

The ABM domain maps to 3–92 (VVKINAIEVP…VATGASLLEF (90 aa)). Heme-binding positions include 22–26 (RFAHR), H75, and 83–86 (VATG).

The protein belongs to the antibiotic biosynthesis monooxygenase family. As to quaternary structure, homodimer.

The catalysed reaction is heme b + 3 AH2 + 3 O2 + 2 H(+) = mycobilin a + Fe(2+) + 3 A + 3 H2O. The enzyme catalyses heme b + 3 AH2 + 3 O2 + 2 H(+) = mycobilin b + Fe(2+) + 3 A + 3 H2O. Catalyzes the oxidative degradation of the heme macrocyclic porphyrin ring in the presence of a suitable electron donor such as ascorbate or NADPH--cytochrome P450 reductase, with subsequent release of free iron. In Mycobacterium tuberculosis (strain CDC 1551 / Oshkosh), this protein is Heme oxygenase (mycobilin-producing) (mhuD).